The sequence spans 334 residues: Oligopeptide transport ATP-binding protein OppF (334 aa).

The ABC transporter domain occupies 12-265 (LEIADLKVHF…PLHPYTKALM (254 aa)). 57–64 (GESGCGKS) contributes to the ATP binding site.

It belongs to the ABC transporter superfamily. The complex is composed of two ATP-binding proteins (OppD and OppF), two transmembrane proteins (OppB and OppC) and a solute-binding protein (OppA).

The protein localises to the cell inner membrane. It catalyses the reaction a [peptide](out) + ATP + H2O = a [peptide](in) + ADP + phosphate + H(+). It carries out the reaction L-alanyl-gamma-D-glutamyl-meso-2,6-diaminopimelate(out) + ATP + H2O = L-alanyl-gamma-D-glutamyl-meso-2,6-diaminopimelate(in) + ADP + phosphate + H(+). Part of the ABC transporter complex OppABCDF involved in the uptake of oligopeptides, including the cell wall murein tripeptide L-alanyl-gamma-D-glutamyl-meso-diaminopimelate. Probably responsible for energy coupling to the transport system. Plays an important nutritional role and is involved in the recycling of cell wall peptides. This is Oligopeptide transport ATP-binding protein OppF from Salmonella typhimurium (strain LT2 / SGSC1412 / ATCC 700720).